The sequence spans 142 residues: uncharacterized protein (142 aa).

This sequence belongs to the GlcG family.

This is an uncharacterized protein from Citrobacter freundii.